The following is a 791-amino-acid chain: MKVPFKWLKDYVNINISANELGDRLTLSGSKVEEIISSGDEIQNVVTGKIEKIERHPDADKLVVCSVNIGKEEPIQIVTGANNMKEEDIVPVAVHGAVLPNDVKIKKGKLRGIMSNGMMCSEKELGMPESGVDGLMILPSDTAIGKDIKEVLDLDNAVIEFEITSNRPDCLSVVGIARETAATLGIKYTMPKLDYTPKNKANIKDSLEVEIRDDLCRRYMARGVKNVKIQESPEWMQERLEEAGVRAINNIVDITNFVMLELGQPLHAFDGRQITSNKIVIEKGKVGEKFATLDKVERTIDESVLCIKDGDRAVALAGIMGGLNSEVKEDTKEIILECANFDGTNIRVSSKKLGLRTESSSKFEKDLDPNLVEIAMDRVCHLIEELDAGEVMEGTIDIYKNPIKERNLKVDSNWMNKFLGTDISKEDMKEYLDRLELKTDVEGDTLNITVPTFRSDIVLKQDVAEEIARIYGYNNIPTTMFNSVSKRAGKTLKQHLEDKVVEILIGSGLNQSISYSFVSPKIFDKILIPKDNDLRNTVKIKNPLGEDYSLMRTTTLASMMEALSRNYSRNNSYARLFEMGKVYIPSQDEKVLPEERNTLVIGMYGEVDYLNLKGILENLIEELNIEKSSYKRESEHPTFHPGKTAKLYVNKEFAGLLGEIHPDVLDNYDIDEKCYIAELNLDVLFKNANIEKKYKALPKFPAVDRDMALLVDDEVLVQDIESIIRNKGGKILEDVKLFDVYKGAQIPEGKKSVAYSIVYRMPNRTLTDAEVNKVHDKIVRTLENNLGAELR.

The tRNA-binding domain maps to 39-149 (GDEIQNVVTG…SDTAIGKDIK (111 aa)). One can recognise a B5 domain in the interval 403-478 (IKERNLKVDS…RIYGYNNIPT (76 aa)). 4 residues coordinate Mg(2+): Asp-456, Asp-462, Glu-465, and Glu-466. Positions 698–791 (PKFPAVDRDM…LENNLGAELR (94 aa)) constitute an FDX-ACB domain.

This sequence belongs to the phenylalanyl-tRNA synthetase beta subunit family. Type 1 subfamily. Tetramer of two alpha and two beta subunits. Mg(2+) is required as a cofactor.

It localises to the cytoplasm. The enzyme catalyses tRNA(Phe) + L-phenylalanine + ATP = L-phenylalanyl-tRNA(Phe) + AMP + diphosphate + H(+). The protein is Phenylalanine--tRNA ligase beta subunit of Clostridium tetani (strain Massachusetts / E88).